The sequence spans 208 residues: Protein-L-isoaspartate O-methyltransferase (208 aa).

Ser59 is an active-site residue.

This sequence belongs to the methyltransferase superfamily. L-isoaspartyl/D-aspartyl protein methyltransferase family.

It is found in the cytoplasm. It catalyses the reaction [protein]-L-isoaspartate + S-adenosyl-L-methionine = [protein]-L-isoaspartate alpha-methyl ester + S-adenosyl-L-homocysteine. Functionally, catalyzes the methyl esterification of L-isoaspartyl residues in peptides and proteins that result from spontaneous decomposition of normal L-aspartyl and L-asparaginyl residues. It plays a role in the repair and/or degradation of damaged proteins. The protein is Protein-L-isoaspartate O-methyltransferase of Escherichia coli (strain K12 / MC4100 / BW2952).